Here is a 153-residue protein sequence, read N- to C-terminus: MRCPSCFHNGTRVLDSRPVDEGRSIRRRRECESCLSRFTTFERVEESPLIVVKKEGTREEFNKEKILRGLIKACEKRPVSLRQLEEVTQSVERELRNLGISEVKSDMIGEIVMEELRDIDDVAYVRFASVYRQFKDLNVFIEELKDILQKERE.

The segment at 3-34 (CPSCFHNGTRVLDSRPVDEGRSIRRRRECESC) is a zinc-finger region. An ATP-cone domain is found at 49–139 (LIVVKKEGTR…VYRQFKDLNV (91 aa)).

The protein belongs to the NrdR family. Requires Zn(2+) as cofactor.

Negatively regulates transcription of bacterial ribonucleotide reductase nrd genes and operons by binding to NrdR-boxes. This Bacillus mycoides (strain KBAB4) (Bacillus weihenstephanensis) protein is Transcriptional repressor NrdR.